The following is a 109-amino-acid chain: Large ribosomal subunit protein uL22 (109 aa).

This sequence belongs to the universal ribosomal protein uL22 family. In terms of assembly, part of the 50S ribosomal subunit.

Its function is as follows. This protein binds specifically to 23S rRNA; its binding is stimulated by other ribosomal proteins, e.g. L4, L17, and L20. It is important during the early stages of 50S assembly. It makes multiple contacts with different domains of the 23S rRNA in the assembled 50S subunit and ribosome. Functionally, the globular domain of the protein is located near the polypeptide exit tunnel on the outside of the subunit, while an extended beta-hairpin is found that lines the wall of the exit tunnel in the center of the 70S ribosome. The chain is Large ribosomal subunit protein uL22 from Dehalococcoides mccartyi (strain ATCC BAA-2100 / JCM 16839 / KCTC 5957 / BAV1).